Consider the following 312-residue polypeptide: Acetyl-coenzyme A carboxylase carboxyl transferase subunit beta (312 aa).

One can recognise a CoA carboxyltransferase N-terminal domain in the interval 24-293 (LWIKCPDSGQ…PHADEVAAPP (270 aa)). The tract at residues 286 to 312 (ADEVAAPPPPDVEGPPPAAEPVALPPA) is disordered. Positions 291–312 (APPPPDVEGPPPAAEPVALPPA) are enriched in pro residues.

Belongs to the AccD/PCCB family. Acetyl-CoA carboxylase is a heterohexamer composed of biotin carboxyl carrier protein (AccB), biotin carboxylase (AccC) and two subunits each of ACCase subunit alpha (AccA) and ACCase subunit beta (AccD).

It is found in the cytoplasm. It carries out the reaction N(6)-carboxybiotinyl-L-lysyl-[protein] + acetyl-CoA = N(6)-biotinyl-L-lysyl-[protein] + malonyl-CoA. It functions in the pathway lipid metabolism; malonyl-CoA biosynthesis; malonyl-CoA from acetyl-CoA: step 1/1. Its function is as follows. Component of the acetyl coenzyme A carboxylase (ACC) complex. Biotin carboxylase (BC) catalyzes the carboxylation of biotin on its carrier protein (BCCP) and then the CO(2) group is transferred by the transcarboxylase to acetyl-CoA to form malonyl-CoA. The polypeptide is Acetyl-coenzyme A carboxylase carboxyl transferase subunit beta (Afipia carboxidovorans (strain ATCC 49405 / DSM 1227 / KCTC 32145 / OM5) (Oligotropha carboxidovorans)).